We begin with the raw amino-acid sequence, 181 residues long: Protein AC41 (181 aa).

Functionally, plays a role in late gene expression. The sequence is that of Protein AC41 (AC41) from Autographa californica nuclear polyhedrosis virus (AcMNPV).